The following is a 302-amino-acid chain: Oxygen-dependent coproporphyrinogen-III oxidase (302 aa).

Ser94 is a binding site for substrate. A divalent metal cation contacts are provided by His98 and His108. The active-site Proton donor is His108. 110 to 112 (NVR) is a binding site for substrate. The a divalent metal cation site is built by His147 and His177. The important for dimerization stretch occupies residues 242 to 277 (YVEFNLVYDRGTLFGLQTGGRTESILMSMPPLVRWQ). Residue 260–262 (GGR) coordinates substrate.

It belongs to the aerobic coproporphyrinogen-III oxidase family. In terms of assembly, homodimer. A divalent metal cation serves as cofactor.

The protein localises to the cytoplasm. It carries out the reaction coproporphyrinogen III + O2 + 2 H(+) = protoporphyrinogen IX + 2 CO2 + 2 H2O. Its pathway is porphyrin-containing compound metabolism; protoporphyrin-IX biosynthesis; protoporphyrinogen-IX from coproporphyrinogen-III (O2 route): step 1/1. Functionally, involved in the heme biosynthesis. Catalyzes the aerobic oxidative decarboxylation of propionate groups of rings A and B of coproporphyrinogen-III to yield the vinyl groups in protoporphyrinogen-IX. The protein is Oxygen-dependent coproporphyrinogen-III oxidase of Shewanella putrefaciens (strain CN-32 / ATCC BAA-453).